Consider the following 410-residue polypeptide: LL-diaminopimelate aminotransferase (410 aa).

Substrate contacts are provided by Tyr15 and Gly42. Pyridoxal 5'-phosphate-binding positions include Tyr72, Ala108–Lys109, Tyr132, Asn188, Tyr219, and Ser247–Ser249. Lys109, Tyr132, and Asn188 together coordinate substrate. Lys250 is modified (N6-(pyridoxal phosphate)lysine). Pyridoxal 5'-phosphate-binding residues include Arg258 and Asn293. Asn293 and Arg389 together coordinate substrate.

This sequence belongs to the class-I pyridoxal-phosphate-dependent aminotransferase family. LL-diaminopimelate aminotransferase subfamily. Homodimer. It depends on pyridoxal 5'-phosphate as a cofactor.

The catalysed reaction is (2S,6S)-2,6-diaminopimelate + 2-oxoglutarate = (S)-2,3,4,5-tetrahydrodipicolinate + L-glutamate + H2O + H(+). It participates in amino-acid biosynthesis; L-lysine biosynthesis via DAP pathway; LL-2,6-diaminopimelate from (S)-tetrahydrodipicolinate (aminotransferase route): step 1/1. Its function is as follows. Involved in the synthesis of meso-diaminopimelate (m-DAP or DL-DAP), required for both lysine and peptidoglycan biosynthesis. Catalyzes the direct conversion of tetrahydrodipicolinate to LL-diaminopimelate. Can also use m-DAP instead of LL-DAP as the amino-group donor. The sequence is that of LL-diaminopimelate aminotransferase from Bacteroides fragilis (strain ATCC 25285 / DSM 2151 / CCUG 4856 / JCM 11019 / LMG 10263 / NCTC 9343 / Onslow / VPI 2553 / EN-2).